We begin with the raw amino-acid sequence, 621 residues long: Bifunctional 3'-phosphoadenosine 5'-phosphosulfate synthase 2 (621 aa).

An adenylyl-sulfate kinase region spans residues 1–216 (MSANFKMNHK…VVELLQEQNI (216 aa)). Position 53 to 58 (53 to 58 (GAGKTT)) interacts with ATP. Residues 80–83 (DNVR), F92, 97–100 (REEN), 123–124 (IS), K162, and 175–176 (GF) each bind adenosine 5'-phosphosulfate. ATP contacts are provided by residues S198, 415–418 (QLRN), 517–521 (GRDPA), and A559. The sulfate adenylyltransferase stretch occupies residues 225-621 (IHELFVPENK…DYYRSLEKTN (397 aa)).

In the N-terminal section; belongs to the APS kinase family. It in the C-terminal section; belongs to the sulfate adenylyltransferase family. As to expression, expressed in liver, cartilage, skin and brain.

The enzyme catalyses sulfate + ATP + H(+) = adenosine 5'-phosphosulfate + diphosphate. It carries out the reaction adenosine 5'-phosphosulfate + ATP = 3'-phosphoadenylyl sulfate + ADP + H(+). Its pathway is sulfur metabolism; sulfate assimilation. Its function is as follows. Bifunctional enzyme with both ATP sulfurylase and APS kinase activity, which mediates two steps in the sulfate activation pathway. The first step is the transfer of a sulfate group to ATP to yield adenosine 5'-phosphosulfate (APS), and the second step is the transfer of a phosphate group from ATP to APS yielding 3'-phosphoadenylylsulfate/PAPS, the activated sulfate donor used by sulfotransferases. In mammals, PAPS is the sole source of sulfate while APS appears to only be an intermediate in the sulfate-activation pathway. May have an important role in skeletogenesis during postnatal growth. The chain is Bifunctional 3'-phosphoadenosine 5'-phosphosulfate synthase 2 (Papss2) from Mus musculus (Mouse).